The chain runs to 498 residues: ATP synthase subunit beta, chloroplastic (498 aa).

Residue threonine 6 is modified to Phosphothreonine. Residue serine 13 is modified to Phosphoserine. An ATP-binding site is contributed by 172–179; that stretch reads GGAGVGKT.

The protein belongs to the ATPase alpha/beta chains family. As to quaternary structure, F-type ATPases have 2 components, CF(1) - the catalytic core - and CF(0) - the membrane proton channel. CF(1) has five subunits: alpha(3), beta(3), gamma(1), delta(1), epsilon(1). CF(0) has four main subunits: a(1), b(1), b'(1) and c(9-12).

It localises to the plastid. It is found in the chloroplast thylakoid membrane. It carries out the reaction ATP + H2O + 4 H(+)(in) = ADP + phosphate + 5 H(+)(out). Functionally, produces ATP from ADP in the presence of a proton gradient across the membrane. The catalytic sites are hosted primarily by the beta subunits. The protein is ATP synthase subunit beta, chloroplastic of Olimarabidopsis pumila (Dwarf rocket).